The primary structure comprises 303 residues: MGRRRKGRDISGWLIVDKPAGLTSTAVVNKVRWALDAKKAGHAGTLDPDATGVLAVALGEATKTVPYVTGALKAYEFEIRLGQATNTDDAEGEVIAQSDLRPTEDEIKEALSAFIGDIEQVPPQFSAVKVDGERAYKRARDGEEMTLAARPLYVDSLLLIDRPDADHVLLEMVCGKGGYVRSIARDLGAALGCLAHVRSLRRIWSGPFDAKNAADLETIEALARTPELDAHVQPLETALDDMPEVKATAEGAVRLRNGNPGMVLASGIEYGETCWASFESRAIAIGRYKSGELHPVRVINAPD.

Catalysis depends on Asp-47, which acts as the Nucleophile.

The protein belongs to the pseudouridine synthase TruB family. Type 1 subfamily.

It carries out the reaction uridine(55) in tRNA = pseudouridine(55) in tRNA. Functionally, responsible for synthesis of pseudouridine from uracil-55 in the psi GC loop of transfer RNAs. The polypeptide is tRNA pseudouridine synthase B (Roseobacter denitrificans (strain ATCC 33942 / OCh 114) (Erythrobacter sp. (strain OCh 114))).